The chain runs to 321 residues: Arabinan endo-1,5-alpha-L-arabinosidase A (321 aa).

The first 19 residues, 1–19, serve as a signal peptide directing secretion; that stretch reads MYQLLSVASVPLLASLVHG. Residue aspartate 34 is the Proton acceptor of the active site. Glutamate 200 serves as the catalytic Proton donor. An N-linked (GlcNAc...) asparagine glycan is attached at asparagine 295.

It belongs to the glycosyl hydrolase 43 family.

It catalyses the reaction Endohydrolysis of (1-&gt;5)-alpha-arabinofuranosidic linkages in (1-&gt;5)-arabinans.. Its pathway is glycan metabolism; L-arabinan degradation. In terms of biological role, its preferred substrate is linear 1,5-alpha-L-arabinan. The enzyme activity is progressively reduced as 1,5-alpha-chains become shorter or more highly substituted. This Aspergillus niger protein is Arabinan endo-1,5-alpha-L-arabinosidase A (abnA).